The sequence spans 126 residues: UPF0102 protein PMT_0624 (126 aa).

The protein belongs to the UPF0102 family.

This chain is UPF0102 protein PMT_0624, found in Prochlorococcus marinus (strain MIT 9313).